A 53-amino-acid chain; its full sequence is UPF0391 membrane protein msr4317 (53 aa).

2 helical membrane-spanning segments follow: residues 4–24 and 33–53; these read WIII…PALA and ILIG…FAVT.

Belongs to the UPF0391 family.

It localises to the cell membrane. This is UPF0391 membrane protein msr4317 from Mesorhizobium japonicum (strain LMG 29417 / CECT 9101 / MAFF 303099) (Mesorhizobium loti (strain MAFF 303099)).